Here is a 555-residue protein sequence, read N- to C-terminus: CTP synthase (555 aa).

The segment at 1–271 is amidoligase domain; it reads MVKRGKKTKY…DDKLAELFNI (271 aa). A CTP-binding site is contributed by Ser19. Ser19 is a binding site for UTP. ATP is bound by residues 20-25 and Asp77; that span reads SLGKGL. Residues Asp77 and Glu145 each coordinate Mg(2+). Residues 152–154, 192–197, and Lys228 contribute to the CTP site; these read DIE and KTKPTQ. UTP-binding positions include 192–197 and Lys228; that span reads KTKPTQ. A Glutamine amidotransferase type-1 domain is found at 297 to 537; that stretch reads RIGIVGKYVE…VKAALEHRDA (241 aa). Gly358 is a binding site for L-glutamine. Cys385 acts as the Nucleophile; for glutamine hydrolysis in catalysis. Residues 386–389, Glu409, and Arg466 each bind L-glutamine; that span reads LGLQ. Catalysis depends on residues His510 and Glu512. The tract at residues 535–555 is disordered; sequence RDAQQRQPPAEVKKLAVGKNG.

This sequence belongs to the CTP synthase family. As to quaternary structure, homotetramer.

It catalyses the reaction UTP + L-glutamine + ATP + H2O = CTP + L-glutamate + ADP + phosphate + 2 H(+). It carries out the reaction L-glutamine + H2O = L-glutamate + NH4(+). The enzyme catalyses UTP + NH4(+) + ATP = CTP + ADP + phosphate + 2 H(+). The protein operates within pyrimidine metabolism; CTP biosynthesis via de novo pathway; CTP from UDP: step 2/2. Allosterically activated by GTP, when glutamine is the substrate; GTP has no effect on the reaction when ammonia is the substrate. The allosteric effector GTP functions by stabilizing the protein conformation that binds the tetrahedral intermediate(s) formed during glutamine hydrolysis. Inhibited by the product CTP, via allosteric rather than competitive inhibition. Its function is as follows. Catalyzes the ATP-dependent amination of UTP to CTP with either L-glutamine or ammonia as the source of nitrogen. Regulates intracellular CTP levels through interactions with the four ribonucleotide triphosphates. The sequence is that of CTP synthase from Anaeromyxobacter dehalogenans (strain 2CP-1 / ATCC BAA-258).